The sequence spans 399 residues: Flavohemoprotein (399 aa).

In terms of domain architecture, Globin spans 1–138; the sequence is MLAEKTRSII…IADIFITVEK (138 aa). Phosphothreonine is present on threonine 22. Histidine 85 serves as a coordination point for heme b. Active-site charge relay system residues include tyrosine 95 and glutamate 137. Residues 146 to 399 form a reductase region; it reads WPGWKPFDIT…FGPKMSTVQV (254 aa). One can recognise an FAD-binding FR-type domain in the interval 147–264; it reads PGWKPFDITA…SAPAGDFAIN (118 aa). FAD contacts are provided by residues tyrosine 189 and 207-210; that span reads RHYS. Residue 281-286 participates in NADP(+) binding; the sequence is GVGVTP. 389-392 is an FAD binding site; the sequence is PFGP.

Belongs to the globin family. Two-domain flavohemoproteins subfamily. This sequence in the C-terminal section; belongs to the flavoprotein pyridine nucleotide cytochrome reductase family. Requires FAD as cofactor. It depends on heme b as a cofactor.

The protein resides in the cytoplasm. It catalyses the reaction 2 nitric oxide + NADPH + 2 O2 = 2 nitrate + NADP(+) + H(+). The catalysed reaction is 2 nitric oxide + NADH + 2 O2 = 2 nitrate + NAD(+) + H(+). Functionally, is involved in NO detoxification in an aerobic process, termed nitric oxide dioxygenase (NOD) reaction that utilizes O(2) and NAD(P)H to convert NO to nitrate, which protects the fungus from various noxious nitrogen compounds. Therefore, plays a central role in the inducible response to nitrosative stress. Its function is as follows. In the presence of oxygen and NADH, it has NADH oxidase activity, which leads to the generation of superoxide and H(2)O(2). Under anaerobic conditions, it also exhibits nitric oxide reductase and FAD reductase activities. However, all these reactions are much lower than NOD activity. In Saccharomyces cerevisiae (strain ATCC 204508 / S288c) (Baker's yeast), this protein is Flavohemoprotein (YHB1).